The sequence spans 390 residues: MQNEPLTPGYHGFPARDSQGNQEPTTTPDAMVQPFTTIPFPPPPQNGIPTEYGVPHTQDYAGQTGEHNLTLYGSTQAHGEQSSNSPSTQNGSLTTEGGAQTDGQQSQTQSSENSESKSTPKRLHVSNIPFRFRDPDLRQMFGQFGKILDVEIIFNERGSKGFGFVTFENSADADRAREKLHGTVVEGRKIEVNNATARVMTNKKMVTPYANGWKLSPVVGAVYGPELYAASSFQADVSLGNDAAVPLSGRGGINTYIPLISLPLVPGFPYPTAATTAAAFRGAHLRGRGRTVYGAVRAVPPTAIPAYPGVVYQDGFYGADLYGGYAAYRYAQPATATAATAAAAAAAAYSDGYGRVYTADPYHALAPAASYGVGAVASLYRGGYSRFAPY.

A disordered region spans residues 1-127 (MQNEPLTPGY…STPKRLHVSN (127 aa)). 2 stretches are compositionally biased toward polar residues: residues 18-28 (SQGNQEPTTTP) and 65-95 (GEHN…SLTT). Residue His-67 is modified to Phosphothreonine. The span at 97–117 (GGAQTDGQQSQTQSSENSESK) shows a compositional bias: low complexity. The 77-residue stretch at 121–197 (KRLHVSNIPF…RKIEVNNATA (77 aa)) folds into the RRM domain. 5 positions are modified to omega-N-methylarginine: Gly-249, Gly-267, Phe-268, Ala-277, and Arg-281. Residues Arg-297 and Arg-329 each carry the asymmetric dimethylarginine modification. Asymmetric dimethylarginine; alternate is present on residues Arg-381 and Arg-386. Omega-N-methylarginine; alternate occurs at positions 381 and 386.

As to quaternary structure, interacts with ER-alpha N-terminal activation domain. Interacts with RBPMS; the interaction allows cooperative assembly of stable cell-specific alternative splicing regulatory complexes.

It is found in the nucleus. Its subcellular location is the cytoplasm. RNA-binding protein that regulates alternative splicing events by binding to 5'-UGCAUGU-3' elements. Prevents binding of U2AF2 to the 3'-splice site. Regulates alternative splicing of tissue-specific exons and of differentially spliced exons during erythropoiesis. RNA-binding protein that seems to act as a coregulatory factor of ER-alpha. Together with RNA binding proteins RBPMS and MBNL1/2, activates vascular smooth muscle cells alternative splicing events. In Homo sapiens (Human), this protein is RNA binding protein fox-1 homolog 2 (RBFOX2).